Consider the following 1134-residue polypeptide: Tyrosine-protein kinase receptor Tie-1 (1134 aa).

The N-terminal stretch at Met1 to Ser22 is a signal peptide. The Extracellular portion of the chain corresponds to Val23–Gln755. In terms of domain architecture, Ig-like C2-type 1 spans Cys43–Ala123. Asn81 and Asn159 each carry an N-linked (GlcNAc...) asparagine glycan. EGF-like domains follow at residues Gly212 to Glu254, Ala256 to Gln301, and Ala303 to Glu343. 9 disulfide bridges follow: Cys226–Cys235, Cys229–Cys242, Cys244–Cys253, Cys266–Cys276, Cys270–Cys289, Cys291–Cys300, Cys313–Cys325, Cys319–Cys331, and Cys333–Cys342. In terms of domain architecture, Ig-like C2-type 2 spans Pro349 to Asn440. Fibronectin type-III domains lie at Pro444–Pro543, Gln546–Ser638, and Ala642–Gly736. N-linked (GlcNAc...) asparagine glycosylation is found at Asn501, Asn592, and Asn705. The helical transmembrane segment at Gln756–Val780 threads the bilayer. Topologically, residues Cys781–Ala1134 are cytoplasmic. One can recognise a Protein kinase domain in the interval Ile835 to Val1114. Residues Ile841–Val849 and Lys866 each bind ATP. Asp975 functions as the Proton acceptor in the catalytic mechanism. The residue at position 1003 (Tyr1003) is a Phosphotyrosine; by autocatalysis.

The protein belongs to the protein kinase superfamily. Tyr protein kinase family. Tie subfamily. As to quaternary structure, heterodimer with TEK/TIE2. Interacts with SVEP1 (via C-terminus). Post-translationally, phosphorylated on tyrosine residues in response to ANGPT1, most likely by TEK/TIE2. As to expression, specifically expressed in developing vascular endothelial cells. Abundantly expressed in lung and heart, moderately in brain, liver and kidney, and weakly in thymus, spleen and testis.

It is found in the cell membrane. The catalysed reaction is L-tyrosyl-[protein] + ATP = O-phospho-L-tyrosyl-[protein] + ADP + H(+). In terms of biological role, transmembrane tyrosine-protein kinase that may modulate TEK/TIE2 activity and contribute to the regulation of angiogenesis. The chain is Tyrosine-protein kinase receptor Tie-1 (Tie1) from Mus musculus (Mouse).